A 632-amino-acid chain; its full sequence is Cytosolic Fe-S cluster assembly factor NAR1 (632 aa).

Cysteine 20 contacts [4Fe-4S] cluster. Positions 27-53 are disordered; it reads LPAKPEDSSNPYEVTTEDKAAASQPPP. Positions 62, 65, and 68 each coordinate [4Fe-4S] cluster. Disordered regions lie at residues 99–119 and 210–231; these read WQTQ…NGHS and LSPE…DTTP. Residues 101–119 show a composition bias toward low complexity; that stretch reads TQNGTNGTNGTNGTTNGHS. The span at 211 to 221 shows a compositional bias: polar residues; it reads SPETSNPSTKP. 4 residues coordinate [4Fe-4S] cluster: cysteine 240, cysteine 295, cysteine 486, and cysteine 490. The segment at 542-573 is disordered; it reads GSDSEEEKVDQDGDQNMQDATTNGHTSEPDIV. Residues 544-554 are compositionally biased toward acidic residues; it reads DSEEEKVDQDG. The segment covering 555–567 has biased composition (polar residues); it reads DQNMQDATTNGHT.

It belongs to the NARF family.

Functionally, component of the cytosolic Fe/S protein assembly machinery. Required for maturation of extramitochondrial Fe/S proteins. May play a role in the transfer of pre-assembled Fe/S clusters to target apoproteins. This chain is Cytosolic Fe-S cluster assembly factor NAR1 (NAR1), found in Phaeosphaeria nodorum (strain SN15 / ATCC MYA-4574 / FGSC 10173) (Glume blotch fungus).